A 1001-amino-acid polypeptide reads, in one-letter code: Integrator complex subunit 7 (1001 aa).

A disordered region spans residues 980 to 1001 (DPSKQGAPAPSTSQAVGQTRRF). Polar residues predominate over residues 989-1001 (PSTSQAVGQTRRF).

Belongs to the Integrator subunit 7 family. In terms of assembly, belongs to the multiprotein complex Integrator, at least composed of IntS1, IntS2, IntS3, IntS4, omd/IntS5, IntS6, defl/IntS7, IntS8, IntS9, IntS10, IntS11, IntS12, asun/IntS13, IntS14 and IntS15. The core complex associates with protein phosphatase 2A subunits mts/PP2A and Pp2A-29B, to form the Integrator-PP2A (INTAC) complex.

The protein resides in the nucleus. Its subcellular location is the cytoplasm. Functionally, component of the integrator complex, a multiprotein complex that terminates RNA polymerase II (Pol II) transcription in the promoter-proximal region of genes. The integrator complex provides a quality checkpoint during transcription elongation by driving premature transcription termination of transcripts that are unfavorably configured for transcriptional elongation: the complex terminates transcription by (1) catalyzing dephosphorylation of the C-terminal domain (CTD) of Pol II subunit Polr2A/Rbp1 and Spt5, and (2) degrading the exiting nascent RNA transcript via endonuclease activity. The integrator complex is also involved in the 3'-end processing of the U7 snRNA, and also the spliceosomal snRNAs U1, U2, U4 and U5. The protein is Integrator complex subunit 7 of Drosophila melanogaster (Fruit fly).